Here is a 168-residue protein sequence, read N- to C-terminus: MGFFLFSQMPSFFLVSTLLLFLIISHSSHAQNSQQDYLDAHNTARADVGVEPLTWDNGVAAYAQNYVSQLAADCNLVHSHGQYGENLAQGSGDFMTAAKAVEMWVDEKQYYDHDSNTCAQGQVCGHYTQVVWRNSVRVGCARVKCNNGGYVVSCNYDPPGNVIGQSPY.

The first 30 residues, Met1–Ala30, serve as a signal peptide directing secretion. Residues Leu38–Tyr156 form the SCP domain.

Belongs to the CRISP family. Three disulfide bonds are present.

It is found in the vacuole. Probably involved in the defense reaction of plants against pathogens. The protein is Pathogenesis-related protein 1B of Nicotiana tabacum (Common tobacco).